A 1447-amino-acid chain; its full sequence is Adhesion G protein-coupled receptor L3 (1447 aa).

An N-terminal signal peptide occupies residues 1–19; that stretch reads MWPSQLLIFMMLLAPIIHA. The Extracellular segment spans residues 20-862; the sequence is FSRAPIPMAV…VKHSDAVHDL (843 aa). One can recognise an SUEL-type lectin domain in the interval 35 to 124; the sequence is SCESYPIELR…KYLEVQYECV (90 aa). 5 disulfides stabilise this stretch: Cys36-Cys66, Cys45-Cys123, Cys78-Cys110, Cys91-Cys97, and Cys135-Cys317. Asn93 is a glycosylation site (N-linked (GlcNAc...) asparagine). The 260-residue stretch at 134-393 folds into the Olfactomedin-like domain; the sequence is LCPGLLKGVY…VVKYSLDFGP (260 aa). The interval 249-279 is interaction with FLRT3; that stretch reads YHDTSPYRWGGKSDIDLAVDENGLWVIYATE. Ca(2+) contacts are provided by Asp264, Asn312, Ala313, and Val367. Residues 426-473 are disordered; the sequence is DISTTGPLGMGSTTTSTTLRTTTLSPGRSTTPSVSGRRNRSTSTPSPA. The span at 428 to 458 shows a compositional bias: low complexity; it reads STTGPLGMGSTTTSTTLRTTTLSPGRSTTPS. Residues Asn464, Asn549, Asn746, Asn759, Asn804, and Asn830 are each glycosylated (N-linked (GlcNAc...) asparagine). The GAIN-B domain occupies 675–854; that stretch reads DIVRENTDNI…AVLMAHVEVK (180 aa). Intrachain disulfides connect Cys805-Cys836 and Cys824-Cys838. The tract at residues 805 to 854 is GPS; it reads CSFWSYSKRTMTGYWSTQGCRLLTTNKTHTTCSCNHLTNFAVLMAHVEVK. The stachel stretch occupies residues 842–855; it reads TNFAVLMAHVEVKH. Residues 863–888 traverse the membrane as a helical segment; sequence LLDVITWVGILLSLVCLLICIFTFCF. At 889-896 the chain is on the cytoplasmic side; sequence FRGLQSDR. Residues 897-918 form a helical membrane-spanning segment; sequence NTIHKNLCISLFVAELLFLIGI. The Extracellular segment spans residues 919-926; sequence NRTDQPIA. A helical transmembrane segment spans residues 927–950; it reads CAVFAALLHFFFLAAFTWMFLEGV. Cys927 and Cys999 are disulfide-bonded. Topologically, residues 951-967 are cytoplasmic; sequence QLYIMLVEVFESEHSRR. A helical membrane pass occupies residues 968–990; that stretch reads KYFYLVGYGMPALIVAVSAAVDY. The Extracellular portion of the chain corresponds to 991-1005; that stretch reads RSYGTDKVCWLRLDT. A helical membrane pass occupies residues 1006-1027; the sequence is YFIWSFIGPATLIIMLNVIFLG. The Cytoplasmic portion of the chain corresponds to 1028-1053; that stretch reads IALYKMFHHTAILKPESGCLDNIKSW. The chain crosses the membrane as a helical span at residues 1054–1073; the sequence is VIGAIALLCLLGLTWAFGLM. Residues 1074-1078 lie on the Extracellular side of the membrane; the sequence is YINES. Asn1076 carries an N-linked (GlcNAc...) asparagine glycan. The chain crosses the membrane as a helical span at residues 1079 to 1104; it reads TVIMAYLFTIFNSLQGMFIFIFHCVL. Residues 1105–1447 lie on the Cytoplasmic side of the membrane; that stretch reads QKKVRKEYGK…KGPAHLVTSL (343 aa). The segment at 1123–1147 is disordered; the sequence is GKSTESSIGSGKTSGSRTPGRYSTG. Ser1164 carries the post-translational modification Phosphoserine. The interval 1423–1447 is disordered; that stretch reads IVPPNKDGTPPEGSSKGPAHLVTSL. Positions 1442-1447 match the PDZ-binding motif; the sequence is HLVTSL.

It belongs to the G-protein coupled receptor 2 family. LN-TM7 subfamily. In terms of assembly, heterodimer of 2 chains generated by proteolytic processing; the large extracellular N-terminal fragment and the membrane-bound C-terminal fragment predominantly remain associated and non-covalently linked. Interacts (via olfactomedin-like domain) with FLRT1 (via extracellular domain). Interacts (via olfactomedin-like domain) with FLRT2 (via extracellular domain). Interacts (via olfactomedin-like domain) with FLRT3 (via extracellular domain); the interaction is direct. Interacts (via extracellular domain) with TENM1. Interacts (via extracellular domain) with TENM2. Interacts (via extracellular domain) with TENM3. Identified in a complex with FLRT3 and UNC5B; does not interact with UNC5B by itself. Identified in a complex with FLRT3 and UNC5D; does not interact with UNC5D by itself. As to quaternary structure, interacts (via PDZ-binding motif) with SHANK3. Interacts (via PDZ-binding motif) with DLG4. Autoproteolytically processed at the GPS region of the GAIN-B domain; this cleavage modulates receptor activity.

It is found in the cell membrane. The protein resides in the postsynaptic cell membrane. Its subcellular location is the cell projection. It localises to the axon. The protein localises to the cell junction. Its activity is regulated as follows. Forms a heterodimer of 2 chains generated by proteolytic processing that remain associated through non-covalent interactions mediated by the GAIN-B domain. In the inactivated receptor, the Stachel sequence (also named stalk) is embedded in the GAIN-B domain, where it adopts a beta-strand conformation. On activation, the Stachel moves into the 7 transmembrane region and adopts a twisted hook-shaped configuration that forms contacts within the receptor, leading to coupling of a G-alpha protein, which activates signaling. The cleaved GAIN-B and N-terminal domains can then dissociate from the rest of the receptor. Orphan adhesion G-protein coupled receptor (aGPCR), which mediates synapse specificity. Ligand binding causes a conformation change that triggers signaling via guanine nucleotide-binding proteins (G proteins) and modulates the activity of downstream effectors. ADGRL3 is coupled with different classes of G alpha proteins, such as G(12)/G(13), G(s), G(i) or G(q), depending on the context. Coupling to G(12)/G(13) G proteins, which mediates the activation Rho small GTPases is the most efficient. Following G-protein coupled receptor activation, associates with cell adhesion molecules that are expressed at the surface of adjacent cells to direct synapse specificity. Specifically mediates the establishment of Schaffer-collateral synapses formed by CA3-region axons on CA1-region pyramidal neurons in the hippocampus. Localizes to postsynaptic spines in excitatory synapses in the S.oriens and S.radiatum and interacts with presynaptic cell adhesion molecules FLRT3 and TENM2, promoting synapse formation. Plays a role in the development of glutamatergic synapses in the cortex. Important in determining the connectivity rates between the principal neurons in the cortex. Functionally, orphan adhesion G-protein coupled receptor (aGPCR), which mediates synapse specificity. Ligand binding causes a conformation change that triggers signaling via guanine nucleotide-binding proteins (G proteins) and modulates the activity of downstream effectors, such as adenylate cyclase. Isoform 1 is specifically coupled to G(s) G proteins and mediates activation of adenylate cyclase activity. Following G-protein coupled receptor activation, undergoes liquid-liquid phase transition, associates with (1) cell adhesion molecules that are expressed at the surface of adjacent cells, as well as (2) PDZ-containing proteins, such as SHANK3 and DLG4, in the cytoplasm to direct synapse formation. The polypeptide is Adhesion G protein-coupled receptor L3 (Homo sapiens (Human)).